Consider the following 83-residue polypeptide: Small ribosomal subunit protein bS18A (83 aa).

This sequence belongs to the bacterial ribosomal protein bS18 family. As to quaternary structure, part of the 30S ribosomal subunit. Forms a tight heterodimer with protein bS6.

Functionally, binds as a heterodimer with protein bS6 to the central domain of the 16S rRNA, where it helps stabilize the platform of the 30S subunit. The polypeptide is Small ribosomal subunit protein bS18A (Nocardia farcinica (strain IFM 10152)).